We begin with the raw amino-acid sequence, 148 residues long: Large-conductance mechanosensitive channel (148 aa).

2 helical membrane-spanning segments follow: residues 15–35 (LDMA…KSLV) and 84–104 (VGVF…VFLL).

The protein belongs to the MscL family. As to quaternary structure, homopentamer.

The protein localises to the cell inner membrane. In terms of biological role, channel that opens in response to stretch forces in the membrane lipid bilayer. May participate in the regulation of osmotic pressure changes within the cell. In Nitratidesulfovibrio vulgaris (strain DSM 19637 / Miyazaki F) (Desulfovibrio vulgaris), this protein is Large-conductance mechanosensitive channel.